Reading from the N-terminus, the 772-residue chain is Uracil catabolism protein 2 (772 aa).

Residues 1-70 are disordered; the sequence is MDINSNASVS…KKPRKKRKTF (70 aa). A compositionally biased stretch (basic and acidic residues) spans 39–51; that stretch reads HPEDSARAKERSE. The span at 59–69 shows a compositional bias: basic residues; the sequence is GNKKPRKKRKT. The segment at residues 72-101 is a DNA-binding region (zn(2)-C6 fungal-type); the sequence is CDTCRRVKTRCDFEPFIGKCYRCNVLQLDC.

Belongs to the URC2 family.

It localises to the cytoplasm. Its subcellular location is the nucleus. Its function is as follows. Probable transcriptional activator involved in uracil catabolism. This is Uracil catabolism protein 2 (URC2) from Saccharomyces cerevisiae (strain ATCC 204508 / S288c) (Baker's yeast).